Here is a 450-residue protein sequence, read N- to C-terminus: Probable ATP-dependent RNA helicase MG425 homolog (450 aa).

The Q motif motif lies at 3-31 (STFNELGVSPALIATLKDNNINQPTTIQQ). Residues 34–206 (IPQFLQHQNL…KQITKNGIFL (173 aa)) form the Helicase ATP-binding domain. 47–54 (SPTGTGKT) contributes to the ATP binding site. The short motif at 154 to 157 (DEVD) is the DEVD box element. Residues 234–384 (RKKQALYSLV…PLRPMRLRLI (151 aa)) form the Helicase C-terminal domain. The tract at residues 429-450 (MRQPERDMQKNKLHDSDWQSNM) is disordered. Residues 430-450 (RQPERDMQKNKLHDSDWQSNM) show a composition bias toward basic and acidic residues.

The protein belongs to the DEAD box helicase family.

It catalyses the reaction ATP + H2O = ADP + phosphate + H(+). The protein is Probable ATP-dependent RNA helicase MG425 homolog of Mycoplasma pneumoniae (strain ATCC 29342 / M129 / Subtype 1) (Mycoplasmoides pneumoniae).